Reading from the N-terminus, the 362-residue chain is Heat-inducible transcription repressor HrcA (362 aa).

It belongs to the HrcA family.

Its function is as follows. Negative regulator of class I heat shock genes (grpE-dnaK-dnaJ and groELS operons). Prevents heat-shock induction of these operons. This chain is Heat-inducible transcription repressor HrcA, found in Bradyrhizobium sp. (strain ORS 278).